Here is a 167-residue protein sequence, read N- to C-terminus: Ribosome-binding factor A (167 aa).

Residues S127–A167 are disordered. Acidic residues predominate over residues P145 to A167.

The protein belongs to the RbfA family. Monomer. Binds 30S ribosomal subunits, but not 50S ribosomal subunits or 70S ribosomes.

It is found in the cytoplasm. In terms of biological role, one of several proteins that assist in the late maturation steps of the functional core of the 30S ribosomal subunit. Associates with free 30S ribosomal subunits (but not with 30S subunits that are part of 70S ribosomes or polysomes). Required for efficient processing of 16S rRNA. May interact with the 5'-terminal helix region of 16S rRNA. The polypeptide is Ribosome-binding factor A (Bifidobacterium adolescentis (strain ATCC 15703 / DSM 20083 / NCTC 11814 / E194a)).